Here is a 152-residue protein sequence, read N- to C-terminus: Nucleoside diphosphate kinase (152 aa).

The ATP site is built by Lys-11, Phe-59, Arg-87, Thr-93, Arg-104, and Asn-114. His-117 serves as the catalytic Pros-phosphohistidine intermediate.

Belongs to the NDK family. As to quaternary structure, homotetramer. Mg(2+) is required as a cofactor.

It is found in the cytoplasm. The catalysed reaction is a 2'-deoxyribonucleoside 5'-diphosphate + ATP = a 2'-deoxyribonucleoside 5'-triphosphate + ADP. It catalyses the reaction a ribonucleoside 5'-diphosphate + ATP = a ribonucleoside 5'-triphosphate + ADP. Major role in the synthesis of nucleoside triphosphates other than ATP. The ATP gamma phosphate is transferred to the NDP beta phosphate via a ping-pong mechanism, using a phosphorylated active-site intermediate. The chain is Nucleoside diphosphate kinase from Prochlorococcus marinus (strain MIT 9215).